The sequence spans 71 residues: Putative antitoxin VapB14 (71 aa).

In terms of biological role, putative antitoxin component of a possible type II toxin-antitoxin (TA) system. The cognate toxin is VapB14. The protein is Putative antitoxin VapB14 (vapB14) of Mycobacterium tuberculosis (strain ATCC 25618 / H37Rv).